A 312-amino-acid chain; its full sequence is Aspartate carbamoyltransferase catalytic subunit (312 aa).

Carbamoyl phosphate contacts are provided by arginine 54 and threonine 55. L-aspartate is bound at residue lysine 83. Arginine 104, histidine 132, and glutamine 135 together coordinate carbamoyl phosphate. Residues arginine 165 and arginine 226 each coordinate L-aspartate. Carbamoyl phosphate-binding residues include leucine 263 and proline 264.

It belongs to the aspartate/ornithine carbamoyltransferase superfamily. ATCase family. As to quaternary structure, heterooligomer of catalytic and regulatory chains.

It catalyses the reaction carbamoyl phosphate + L-aspartate = N-carbamoyl-L-aspartate + phosphate + H(+). The protein operates within pyrimidine metabolism; UMP biosynthesis via de novo pathway; (S)-dihydroorotate from bicarbonate: step 2/3. Its function is as follows. Catalyzes the condensation of carbamoyl phosphate and aspartate to form carbamoyl aspartate and inorganic phosphate, the committed step in the de novo pyrimidine nucleotide biosynthesis pathway. This is Aspartate carbamoyltransferase catalytic subunit from Methanothermobacter thermautotrophicus (strain ATCC 29096 / DSM 1053 / JCM 10044 / NBRC 100330 / Delta H) (Methanobacterium thermoautotrophicum).